The sequence spans 296 residues: MVNLLFLFFIMSFFPNNIFDYDQQAITDLLITASLKILFALAILLIGFWLSKRLQKLIIRALRKSNLEPTFISFAGNISYYLLLVVFFVLCLAQLGIQTSSLVALLGASTLAIGLALQGSLANVAGGILLVLFNYFRVGERIEVAGIEGIVESIEILSTTICTYDNRLVTIPNKQIIENNIINHVGKPERRIDLVIGVGYEEDIDHVRSSLQWVIDQNSEVCTEPAPTIALGELGDSSVNFYVRPWVKSEDYFRLKLQLTEAIKRKLDEENISIPFPQRDVHLIQPETKELDIKAA.

The next 6 membrane-spanning stretches (helical) occupy residues 1–21 (MVNL…IFDY), 30–50 (LITA…GFWL), 71–91 (FISF…FVLC), 92–112 (LAQL…STLA), 113–133 (IGLA…LVLF), and 142–162 (IEVA…TTIC).

Belongs to the MscS (TC 1.A.23) family.

It localises to the cell membrane. This is an uncharacterized protein from Synechocystis sp. (strain ATCC 27184 / PCC 6803 / Kazusa).